Consider the following 729-residue polypeptide: Phosphoribosylformylglycinamidine synthase subunit PurL (729 aa).

The active site involves histidine 54. Positions 57 and 96 each coordinate ATP. Glutamate 98 contacts Mg(2+). Residues 99–102 (SHNH) and arginine 121 each bind substrate. Histidine 100 (proton acceptor) is an active-site residue. Aspartate 122 contributes to the Mg(2+) binding site. A substrate-binding site is contributed by glutamine 245. Aspartate 273 is a binding site for Mg(2+). 317–319 (ETQ) is a substrate binding site. ATP-binding residues include aspartate 495 and glycine 532. Mg(2+) is bound at residue asparagine 533. Position 535 (serine 535) interacts with substrate.

Belongs to the FGAMS family. As to quaternary structure, monomer. Part of the FGAM synthase complex composed of 1 PurL, 1 PurQ and 2 PurS subunits.

The protein localises to the cytoplasm. The catalysed reaction is N(2)-formyl-N(1)-(5-phospho-beta-D-ribosyl)glycinamide + L-glutamine + ATP + H2O = 2-formamido-N(1)-(5-O-phospho-beta-D-ribosyl)acetamidine + L-glutamate + ADP + phosphate + H(+). Its pathway is purine metabolism; IMP biosynthesis via de novo pathway; 5-amino-1-(5-phospho-D-ribosyl)imidazole from N(2)-formyl-N(1)-(5-phospho-D-ribosyl)glycinamide: step 1/2. Its function is as follows. Part of the phosphoribosylformylglycinamidine synthase complex involved in the purines biosynthetic pathway. Catalyzes the ATP-dependent conversion of formylglycinamide ribonucleotide (FGAR) and glutamine to yield formylglycinamidine ribonucleotide (FGAM) and glutamate. The FGAM synthase complex is composed of three subunits. PurQ produces an ammonia molecule by converting glutamine to glutamate. PurL transfers the ammonia molecule to FGAR to form FGAM in an ATP-dependent manner. PurS interacts with PurQ and PurL and is thought to assist in the transfer of the ammonia molecule from PurQ to PurL. The chain is Phosphoribosylformylglycinamidine synthase subunit PurL from Staphylococcus epidermidis (strain ATCC 35984 / DSM 28319 / BCRC 17069 / CCUG 31568 / BM 3577 / RP62A).